The sequence spans 135 residues: Ribosome-binding factor A (135 aa).

This sequence belongs to the RbfA family. As to quaternary structure, monomer. Binds 30S ribosomal subunits, but not 50S ribosomal subunits or 70S ribosomes.

It localises to the cytoplasm. In terms of biological role, one of several proteins that assist in the late maturation steps of the functional core of the 30S ribosomal subunit. Associates with free 30S ribosomal subunits (but not with 30S subunits that are part of 70S ribosomes or polysomes). Required for efficient processing of 16S rRNA. May interact with the 5'-terminal helix region of 16S rRNA. The chain is Ribosome-binding factor A from Bartonella quintana (strain Toulouse) (Rochalimaea quintana).